A 739-amino-acid chain; its full sequence is Vascular cell adhesion protein 1 (739 aa).

Residues 1–24 (MPVKMVAIFGASTVLWILFAVSQA) form the signal peptide. Ig-like C2-type domains are found at residues 25-111 (FKIE…IQVD), 119-212 (PEIQ…KERE), 223-309 (PKNT…LIVQ), 312-397 (PFTV…KTIQ), 408-506 (EIEI…QTLY), 514-595 (PTIW…VELI), and 601-682 (KDIQ…RSLT). Topologically, residues 25–698 (FKIEISPEYK…ENNKDYFSPE (674 aa)) are extracellular. Cystine bridges form between C47-C95, C52-C99, C137-C195, C246-C291, and C335-C383. The N-linked (GlcNAc...) asparagine glycan is linked to N273. Residues N424, N531, N561, and N650 are each glycosylated (N-linked (GlcNAc...) asparagine). C534 and C579 are disulfide-bonded. The chain crosses the membrane as a helical span at residues 699-720 (LLALYFASSLVIPAIGMIIYFA). Over 721–739 (RKANMKGSYSLVEAQKSKV) the chain is Cytoplasmic.

Binds to ECMV-D capsid proteins and acts as a receptor for this virus. Post-translationally, cleaved by the metalloproteinase ADAM17 to generate the soluble form. Sialoglycoprotein. In terms of processing, ubiquitinated by TRIM65 via 'Lys-48'-linked ubiquitination; leading to proteasomal degradation. In terms of tissue distribution, expressed in aortic endothelial cells, with low expression in the descending thoracic aorta and the outer curvature of the aortic arch, where pulsatory shear stress exists, and high in the inner curvature of the aortic arch, where oscillatory shear stress prevails (at protein level). Expressed on inflamed vascular endothelium, as well as on macrophage-like and dendritic cell types in both normal and inflamed tissue.

It is found in the cell membrane. The protein localises to the secreted. In terms of biological role, cell adhesion glycoprotein predominantly expressed on the surface of endothelial cells that plays an important role in immune surveillance and inflammation. Acts as a major regulator of leukocyte adhesion to the endothelium through interaction with different types of integrins. During inflammatory responses, binds ligands on the surface of activated endothelial cells to initiate the activation of calcium channels and the plasma membrane-associated small GTPase RAC1 leading to leukocyte transendothelial migration. Also serves as a quality-control checkpoint for entry into bone marrow by providing a 'don't-eat-me' stamping in the context of major histocompatibility complex (MHC) class-I presentation. This Rattus norvegicus (Rat) protein is Vascular cell adhesion protein 1 (Vcam1).